The sequence spans 90 residues: Protein LURE 1.2 (90 aa).

An N-terminal signal peptide occupies residues 1–19 (MKLPIIFLTLLIFVSSCTS). N-linked (GlcNAc...) asparagine glycosylation is present at Asn23. 3 cysteine pairs are disulfide-bonded: Cys58–Cys75, Cys61–Cys82, and Cys65–Cys84. Residues 67 to 87 (RRGKYIRTCSFERKLCRCSIS) form a PRK6 binding region.

The protein belongs to the DEFL family. Interacts with MDIS1, MIK1, MIK2 and TDR/PXY, but not with MDIS2. Binds to PRK6 LRRs. Expressed in the pistil. Detected exclusively in the synergid cells.

The protein resides in the secreted. In terms of biological role, pollen tube attractants guiding pollen tubes to the ovular micropyle. Attracts specifically pollen tubes from A.thaliana, but not those from A.lyrata. Triggers endocytosis of MDIS1 in the pollen tube tip. The protein is Protein LURE 1.2 of Arabidopsis thaliana (Mouse-ear cress).